A 123-amino-acid polypeptide reads, in one-letter code: Fluoride-specific ion channel FluC 2 (123 aa).

The next 4 membrane-spanning stretches (helical) occupy residues 3-23, 38-58, 62-82, and 94-114; these read LDGFIYILVGSTFGLIVRMFI, ILIVNVLASLFLGIFEGLNIT, LILFIFVGFLGCFSTFSSFIY, and LILLIYYAEVILLSFLFFCLG. 2 residues coordinate Na(+): Gly72 and Ser75.

This sequence belongs to the fluoride channel Fluc/FEX (TC 1.A.43) family.

It is found in the cell inner membrane. The enzyme catalyses fluoride(in) = fluoride(out). Na(+) is not transported, but it plays an essential structural role and its presence is essential for fluoride channel function. In terms of biological role, fluoride-specific ion channel. Important for reducing fluoride concentration in the cell, thus reducing its toxicity. This chain is Fluoride-specific ion channel FluC 2, found in Prochlorococcus marinus subsp. pastoris (strain CCMP1986 / NIES-2087 / MED4).